The primary structure comprises 658 residues: Squalene--hopene cyclase (658 aa).

The stretch at 69-110 (EAKIGRYLRRIQGEHGGWSLFYGGDLDLSATVKAYFALKMIG) is one PFTB 1 repeat. D392 functions as the Proton donor in the catalytic mechanism. PFTB repeat units follow at residues 418–459 (KARA…GALL), 486–526 (MKAA…NVAA), and 534–584 (IQKA…GLMA).

Belongs to the terpene cyclase/mutase family.

The protein localises to the cell membrane. The enzyme catalyses squalene = hop-22(29)-ene. The catalysed reaction is squalene + H2O = hopan-22-ol. It functions in the pathway secondary metabolite biosynthesis; hopanoid biosynthesis. Catalyzes the cyclization of squalene into hopene. The sequence is that of Squalene--hopene cyclase (shc) from Zymomonas mobilis subsp. mobilis (strain ATCC 31821 / ZM4 / CP4).